A 92-amino-acid polypeptide reads, in one-letter code: DNA-directed RNA polymerase subunit omega (92 aa).

The protein belongs to the RNA polymerase subunit omega family. In terms of assembly, the RNAP catalytic core consists of 2 alpha, 1 beta, 1 beta' and 1 omega subunit. When a sigma factor is associated with the core the holoenzyme is formed, which can initiate transcription.

The enzyme catalyses RNA(n) + a ribonucleoside 5'-triphosphate = RNA(n+1) + diphosphate. Promotes RNA polymerase assembly. Latches the N- and C-terminal regions of the beta' subunit thereby facilitating its interaction with the beta and alpha subunits. This chain is DNA-directed RNA polymerase subunit omega, found in Shewanella frigidimarina (strain NCIMB 400).